The primary structure comprises 585 residues: Putative ABC transporter ATP-binding protein MG187 (585 aa).

Residues 8 to 468 (IELKNIVVDF…PANEFVARFL (461 aa)) form the ABC transporter domain. An ATP-binding site is contributed by 40–47 (GPSGCGKT).

It belongs to the ABC transporter superfamily.

In Mycoplasma genitalium (strain ATCC 33530 / DSM 19775 / NCTC 10195 / G37) (Mycoplasmoides genitalium), this protein is Putative ABC transporter ATP-binding protein MG187.